We begin with the raw amino-acid sequence, 436 residues long: 3-ketoacyl-CoA thiolase (436 aa).

The Acyl-thioester intermediate role is filled by cysteine 99. Residues histidine 392 and cysteine 422 each act as proton acceptor in the active site.

Belongs to the thiolase-like superfamily. Thiolase family. Heterotetramer of two alpha chains (FadJ) and two beta chains (FadI).

It is found in the cytoplasm. The enzyme catalyses an acyl-CoA + acetyl-CoA = a 3-oxoacyl-CoA + CoA. It functions in the pathway lipid metabolism; fatty acid beta-oxidation. In terms of biological role, catalyzes the final step of fatty acid oxidation in which acetyl-CoA is released and the CoA ester of a fatty acid two carbons shorter is formed. This is 3-ketoacyl-CoA thiolase from Salmonella paratyphi A (strain AKU_12601).